Here is an 84-residue protein sequence, read N- to C-terminus: Large ribosomal subunit protein bL27c (84 aa).

Residues 1–23 (MAHKKGAGSTKNGRDSNAKRLGV) form a disordered region.

Belongs to the bacterial ribosomal protein bL27 family.

Its subcellular location is the plastid. It localises to the chloroplast. The chain is Large ribosomal subunit protein bL27c from Thalassiosira pseudonana (Marine diatom).